The sequence spans 227 residues: Cytochrome c oxidase subunit 2 (227 aa).

Over 1–14 (MAYPFQLGLQDATS) the chain is Mitochondrial intermembrane. Residues 15–45 (PIMEELTNFHDHTLMIVFLISSLVLYIISLM) traverse the membrane as a helical segment. Residues 46 to 59 (LTTKLTHTSTMDAQ) lie on the Mitochondrial matrix side of the membrane. The chain crosses the membrane as a helical span at residues 60 to 87 (EVETIWTILPAAILVLIALPSLRILYMM). Over 88 to 227 (DEINNPVLTV…YFESWSASMI (140 aa)) the chain is Mitochondrial intermembrane. Residues histidine 161, cysteine 196, glutamate 198, cysteine 200, histidine 204, and methionine 207 each contribute to the Cu cation site. Position 198 (glutamate 198) interacts with Mg(2+). Tyrosine 218 carries the post-translational modification Phosphotyrosine.

This sequence belongs to the cytochrome c oxidase subunit 2 family. Component of the cytochrome c oxidase (complex IV, CIV), a multisubunit enzyme composed of 14 subunits. The complex is composed of a catalytic core of 3 subunits MT-CO1, MT-CO2 and MT-CO3, encoded in the mitochondrial DNA, and 11 supernumerary subunits COX4I, COX5A, COX5B, COX6A, COX6B, COX6C, COX7A, COX7B, COX7C, COX8 and NDUFA4, which are encoded in the nuclear genome. The complex exists as a monomer or a dimer and forms supercomplexes (SCs) in the inner mitochondrial membrane with NADH-ubiquinone oxidoreductase (complex I, CI) and ubiquinol-cytochrome c oxidoreductase (cytochrome b-c1 complex, complex III, CIII), resulting in different assemblies (supercomplex SCI(1)III(2)IV(1) and megacomplex MCI(2)III(2)IV(2)). Found in a complex with TMEM177, COA6, COX18, COX20, SCO1 and SCO2. Interacts with TMEM177 in a COX20-dependent manner. Interacts with COX20. Interacts with COX16. Requires Cu cation as cofactor.

It is found in the mitochondrion inner membrane. The enzyme catalyses 4 Fe(II)-[cytochrome c] + O2 + 8 H(+)(in) = 4 Fe(III)-[cytochrome c] + 2 H2O + 4 H(+)(out). Its function is as follows. Component of the cytochrome c oxidase, the last enzyme in the mitochondrial electron transport chain which drives oxidative phosphorylation. The respiratory chain contains 3 multisubunit complexes succinate dehydrogenase (complex II, CII), ubiquinol-cytochrome c oxidoreductase (cytochrome b-c1 complex, complex III, CIII) and cytochrome c oxidase (complex IV, CIV), that cooperate to transfer electrons derived from NADH and succinate to molecular oxygen, creating an electrochemical gradient over the inner membrane that drives transmembrane transport and the ATP synthase. Cytochrome c oxidase is the component of the respiratory chain that catalyzes the reduction of oxygen to water. Electrons originating from reduced cytochrome c in the intermembrane space (IMS) are transferred via the dinuclear copper A center (CU(A)) of subunit 2 and heme A of subunit 1 to the active site in subunit 1, a binuclear center (BNC) formed by heme A3 and copper B (CU(B)). The BNC reduces molecular oxygen to 2 water molecules using 4 electrons from cytochrome c in the IMS and 4 protons from the mitochondrial matrix. The polypeptide is Cytochrome c oxidase subunit 2 (MT-CO2) (Conilurus penicillatus (Brush-tailed rabbit-rat)).